The sequence spans 381 residues: Acetylornithine deacetylase (381 aa).

Histidine 79 lines the Zn(2+) pocket. Residue aspartate 81 is part of the active site. A Zn(2+)-binding site is contributed by aspartate 111. The active site involves glutamate 143. Zn(2+)-binding residues include glutamate 144, glutamate 168, and histidine 354.

The protein belongs to the peptidase M20A family. ArgE subfamily. Homodimer. Requires Zn(2+) as cofactor. The cofactor is Co(2+). Glutathione serves as cofactor.

It localises to the cytoplasm. It catalyses the reaction N(2)-acetyl-L-ornithine + H2O = L-ornithine + acetate. It functions in the pathway amino-acid biosynthesis; L-arginine biosynthesis; L-ornithine from N(2)-acetyl-L-ornithine (linear): step 1/1. Its function is as follows. Catalyzes the hydrolysis of the amide bond of N(2)-acetylated L-amino acids. Cleaves the acetyl group from N-acetyl-L-ornithine to form L-ornithine, an intermediate in L-arginine biosynthesis pathway, and a branchpoint in the synthesis of polyamines. This chain is Acetylornithine deacetylase, found in Buchnera aphidicola subsp. Acyrthosiphon pisum (strain 5A).